The primary structure comprises 417 residues: Citrate synthase-related protein DDB_G0287281 (417 aa).

Residues 284–317 (NKNNNNNNNNNNNNNNNNNNNNNNNNSEDDDDDN) form a disordered region. A compositionally biased stretch (low complexity) spans 286–309 (NNNNNNNNNNNNNNNNNNNNNNNN).

The protein belongs to the citrate synthase family.

This is Citrate synthase-related protein DDB_G0287281 from Dictyostelium discoideum (Social amoeba).